We begin with the raw amino-acid sequence, 297 residues long: uncharacterized protein (297 aa).

Transmembrane regions (helical) follow at residues 114–136, 150–170, 197–217, 227–247, and 269–289; these read YNRWLVVFMIGLSCAAFAHLSSG, LLYDMLFAAIPAVGFALVFNV, MPIVFATFFATCVIGFLGVHL, AFTVAAIIPMIPGVHAYKAMI, and FINTSFILGAIVFGLALPGLL.

This sequence belongs to the ThrE exporter (TC 2.A.79) family.

The protein resides in the cell inner membrane. This is an uncharacterized protein from Haemophilus influenzae (strain ATCC 51907 / DSM 11121 / KW20 / Rd).